Consider the following 11103-residue polypeptide: Colossin-A (11103 aa).

Residues 1 to 35 form the signal peptide; that stretch reads MGTIKTKFKNNYLKNSYLFIIYIILFNLVIGIANS. N-linked (GlcNAc...) asparagine glycans are attached at residues N95, N120, N137, and N198. One copy of the Kelch 1 repeat lies at 273-324; that stretch reads NLFAVGNYVFFDVNRDGVHETTELFAPNVKVELYDAISSTRLIASTFTDLNG. Residues 298–359 enclose the CNA-B 1 domain; that stretch reads APNVKVELYD…SNGPDNVINA (62 aa). N-linked (GlcNAc...) asparagine glycans are attached at residues N372, N386, and N422. Positions 423–469 constitute a CNA-B 2 domain; the sequence is LSGITVQLTTPSHVVLKTAQTDYAGNYVFDDLSEGVYSVHFILPENY. Residue N493 is glycosylated (N-linked (GlcNAc...) asparagine). CNA-B domains are found at residues 551-599, 676-745, 803-871, 931-999, 1057-1095, and 1170-1231; these read LPGV…PDGY, VANV…INLT, APFV…FTLN, AEGV…IDLS, LPNI…EGDY, and LSNT…FNSS. N678 carries N-linked (GlcNAc...) asparagine glycosylation. N1059, N1229, and N1239 each carry an N-linked (GlcNAc...) asparagine glycan. The region spanning 1277-1314 is the CNA-B 9 domain; the sequence is ISNIPLSLISQKTNQIISSVVTDSNGKYQFEDVPPGDY. N1329 is a glycosylation site (N-linked (GlcNAc...) asparagine). CNA-B domains lie at 1391–1458, 1494–1530, 1602–1651, 1708–1779, 1824–1891, 1927–1963, 2035–2086, and 2141–2177; these read SDVS…FKLT, LPGV…PGDY, LPGV…YKQV, LSDI…VTVK, LPGV…QVAQ, and VEGI…PGDY. An N-linked (GlcNAc...) asparagine glycan is attached at N1613. The segment at 1716-1740 is disordered; the sequence is TDKDGNEISNTKSGPDGKYQFEDVP. N-linked (GlcNAc...) asparagine glycans are attached at residues N1759 and N1772. N2046 is a glycosylation site (N-linked (GlcNAc...) asparagine). Residues N2192 and N2311 are each glycosylated (N-linked (GlcNAc...) asparagine). CNA-B domains lie at 2254–2321, 2357–2402, 2465–2514, 2571–2640, 2687–2754, 2790–2835, 2898–2947, and 3004–3040; these read SDVS…FKLT, LPGV…TPIG, LPGV…YKQV, LSDI…NFVT, and LEGI…PGDY. The N-linked (GlcNAc...) asparagine glycan is linked to N2476. The disordered stretch occupies residues 2580–2603; sequence DKDGNEITNTKSGPDGKYQFEDVP. Residue N2622 is glycosylated (N-linked (GlcNAc...) asparagine). Residues N2801 and N2909 are each glycosylated (N-linked (GlcNAc...) asparagine). Residues N3048, N3055, and N3118 are each glycosylated (N-linked (GlcNAc...) asparagine). CNA-B domains are found at residues 3117–3184, 3220–3256, 3328–3364, and 3434–3470; these read SNVS…FKLT, LPGV…PGDY, LPGV…PGSY, and VEGI…PGDY. N-linked (GlcNAc...) asparagine glycosylation occurs at N3339. A glycan (N-linked (GlcNAc...) asparagine) is linked at N3485. The stretch at 3503 to 3549 is one Kelch 2 repeat; that stretch reads SCFAVSGPLDNQNLGLSLFYEIGTMVWIDSNNNGKFEQPSDVLKSDV. CNA-B domains are found at residues 3547-3614, 3650-3686, and 3758-3809; these read SDVS…FKLT, LPGV…PGDY, and LPGV…QVAQ. N-linked (GlcNAc...) asparagine glycosylation is found at N3769 and N3827. One can recognise a CNA-B 33 domain in the interval 3864-3900; it reads LSDITIRLTDKDGKVIQSTTSGPDGKYQFEDVPPGDY. N3915 is a glycosylation site (N-linked (GlcNAc...) asparagine). 8 CNA-B domains span residues 3980–4047, 4083–4128, 4191–4240, 4297–4378, 4425–4492, 4528–4573, 4636–4685, and 4742–4778; these read SDVS…FKLT, LPGV…TPIG, LPGV…YKQV, LSDI…NFVT, and VEGI…PGDY. N4202 is a glycosylation site (N-linked (GlcNAc...) asparagine). Positions 4286–4341 are disordered; sequence NTGKQTDDSPPLSDITIRLTDKDGNEITKTKSRPDGNENSNTKSGPDGKYQFEDVP. Basic and acidic residues predominate over residues 4304–4321; sequence LTDKDGNEITKTKSRPDG. N4360 carries N-linked (GlcNAc...) asparagine glycosylation. A glycan (N-linked (GlcNAc...) asparagine) is linked at N4647. N4792 and N4918 each carry an N-linked (GlcNAc...) asparagine glycan. CNA-B domains lie at 4865–4928, 4964–5009, 5072–5123, and 5178–5214; these read ITLT…FKLT, LPGV…TPIG, LPGV…QVAQ, and LEGI…PGDY. N5083 carries an N-linked (GlcNAc...) asparagine glycan. 3 N-linked (GlcNAc...) asparagine glycosylation sites follow: N5229, N5292, and N5348. Residues 5247–5293 form a Kelch 3 repeat; sequence SCFAVSGPLDNQNLGLSPFYEIGTIVWIDSNNNDKFEQPSDIGKSNV. CNA-B domains are found at residues 5291–5358, 5394–5430, 5502–5553, and 5608–5644; these read SNVS…FKLT, LPGV…PGDY, LPGV…QVAQ, and LSDI…PGDY. Residue N5513 is glycosylated (N-linked (GlcNAc...) asparagine). A glycan (N-linked (GlcNAc...) asparagine) is linked at N5659. CNA-B domains follow at residues 5724 to 5791, 5827 to 5872, 5935 to 5984, and 6041 to 6077; these read SDVS…FKLT, LPGV…TPIG, LPGV…YKQV, and VEGI…PGDY. N5946 carries an N-linked (GlcNAc...) asparagine glycan. N6092 and N6155 each carry an N-linked (GlcNAc...) asparagine glycan. 4 CNA-B domains span residues 6154-6221, 6257-6302, 6365-6416, and 6471-6507; these read SNVS…FKLT, LPGV…TPIG, LPGV…QDAQ, and LSDI…PGDY. A glycan (N-linked (GlcNAc...) asparagine) is linked at N6376. Residues N6522 and N6535 are each glycosylated (N-linked (GlcNAc...) asparagine). CNA-B domains lie at 6587–6654, 6690–6726, 6798–6849, and 6904–6940; these read SDVS…FKLT, LEGV…PGDY, LPGV…QVNQ, and VEGI…PGDY. N-linked (GlcNAc...) asparagine glycosylation is found at N6701, N6809, and N6848. N6954, N7080, N7137, and N7245 each carry an N-linked (GlcNAc...) asparagine glycan. 8 CNA-B domains span residues 7023-7090, 7126-7171, 7234-7285, 7340-7411, 7456-7523, 7559-7596, 7668-7719, and 7774-7810; these read SDVS…FKLT, LAGV…TPIG, LPGV…QDAQ, LSDI…VTVK, LPGV…PGDY, LTGV…QVAQ, and VEGI…PGDY. Residues 7351 to 7372 form a disordered region; it reads DGNEITNTKSGPDGKYQFEDVP. N-linked (GlcNAc...) asparagine glycosylation is found at N7391 and N7404. A glycan (N-linked (GlcNAc...) asparagine) is linked at N7679. N-linked (GlcNAc...) asparagine glycans are attached at residues N7825 and N7837. CNA-B domains follow at residues 7887–7954, 7990–8035, 8098–8149, 8204–8265, 8313–8374, 8420–8456, and 8528–8587; these read SDVS…FKLT, LPGV…TPIG, LPGV…QVAQ, IPNI…FSLS, VGKS…VVDQ, LPGV…QGDY, and LPGI…PFDS. Residues N8109 and N8255 are each glycosylated (N-linked (GlcNAc...) asparagine). N-linked (GlcNAc...) asparagine glycosylation is found at N8441, N8539, N8629, N8636, N8655, N8693, N8753, N8811, N8896, N8930, N8976, N9023, N9073, N9087, N9123, N9137, N9146, N9149, N9186, N9297, N9305, N9349, N9409, N9419, N9533, N9543, N9556, N9601, N9709, N9718, N9786, N9839, N9850, N9867, N9891, N9941, N9957, N9989, N10042, N10096, N10111, N10174, N10267, N10315, N10348, N10360, N10379, N10394, N10431, N10477, N10552, N10581, N10715, N10786, N10802, N10943, and N11018. Residues 8592-8638 form a Kelch 4 repeat; sequence CFDLLDKSITNANLGLIPLYNIGSDAWLDNLNNGVRRNDSLLVPNVT. Residues 8634-8680 form the CNA-B 77 domain; it reads VPNVTMSLYDNNGNLIETTITNSSGKYQFNDIQPGSYCVRATVPSNY. One can recognise a CNA-B 78 domain in the interval 8751-8810; sequence LPNVTVQLYDKVSGNILAATRSDDKGGYVVPNLLPSADYCVQFEVPPGYIVVVDSDDSVT. In terms of domain architecture, CNA-B 79 spans 8965–9014; that stretch reads LPGVSVSLFSPNGTSIANTITDENGKYAFKDQVPGSYCIKMIIPPHYQQV. In terms of domain architecture, CNA-B 80 spans 9071–9107; the sequence is VPNITMTLLDSQGKQINSTITNANGFYQFVDVAPGNY. The region spanning 9185–9220 is the CNA-B 81 domain; the sequence is ANVSLSLVNTGNSEIKTTTTNSQGKYSFGQLLAGNY. In terms of domain architecture, CNA-B 82 spans 9299-9332; sequence TITLTPNNTALPTQTTTTDVNGNYRFDNLVVGNY. 2 consecutive CNA-B domains span residues 9407–9447 and 9531–9569; these read LVNI…VVQF and MANI…PGNY. The CNA-B 85 domain maps to 9659-9728; it reads VEGITVRIYD…ATGYISIDLS (70 aa). The 60-residue stretch at 10044–10103 folds into the CNA-B 86 domain; that stretch reads TLFNADGSTPNDIFGKPIQMAVTDVNGKYSIPNVPPGSYYMTVSIPPRYIISNFTTTGLV. The 65-residue stretch at 10172-10236 folds into the CNA-B 87 domain; the sequence is LPNVTVLLLN…ITPTKLVSTS (65 aa). One can recognise a CNA-B 88 domain in the interval 10313-10370; it reads PGNFTVQLKSANQAVNGGLTTVPIGTVVATSPVAANGSFSIPNLQLGNYTLTLIPPSG.

It belongs to the serine-aspartate repeat-containing protein (SDr) family.

It is found in the secreted. The sequence is that of Colossin-A (colA) from Dictyostelium discoideum (Social amoeba).